Reading from the N-terminus, the 138-residue chain is Large ribosomal subunit protein uL14 (138 aa).

It belongs to the universal ribosomal protein uL14 family. As to quaternary structure, part of the 50S ribosomal subunit. Forms a cluster with proteins L3 and L24e, part of which may contact the 16S rRNA in 2 intersubunit bridges. Contacts initiation factor aIF-6.

It is found in the cytoplasm. In terms of biological role, binds to 23S rRNA. Forms part of two intersubunit bridges in the 70S ribosome. This Saccharolobus solfataricus (strain ATCC 35092 / DSM 1617 / JCM 11322 / P2) (Sulfolobus solfataricus) protein is Large ribosomal subunit protein uL14.